The following is a 297-amino-acid chain: HTH-type transcriptional regulator ArgP (297 aa).

In terms of domain architecture, HTH lysR-type spans 4 to 60 (PDYRTLQALDAVIRERGFERAAQKLCITQSAVSQRIKQLENMFGQPLLVRTVPPRPT). Positions 21–40 (FERAAQKLCITQSAVSQRIK) form a DNA-binding region, H-T-H motif.

It belongs to the LysR transcriptional regulatory family. Homodimer.

Controls the transcription of genes involved in arginine and lysine metabolism. This chain is HTH-type transcriptional regulator ArgP, found in Klebsiella pneumoniae subsp. pneumoniae (strain ATCC 700721 / MGH 78578).